The following is a 191-amino-acid chain: Thymidylate kinase (191 aa).

ATP is bound at residue Gly7 to Ser14.

The protein belongs to the thymidylate kinase family.

It catalyses the reaction dTMP + ATP = dTDP + ADP. Functionally, phosphorylation of dTMP to form dTDP in both de novo and salvage pathways of dTTP synthesis. The protein is Thymidylate kinase of Sulfurovum sp. (strain NBC37-1).